A 549-amino-acid polypeptide reads, in one-letter code: Thermosome subunit (549 aa).

Residues 528–538 (EKEKEGEKGGG) show a composition bias toward basic and acidic residues. The disordered stretch occupies residues 528–549 (EKEKEGEKGGGSEEFSGSSDLD). The span at 540-549 (EEFSGSSDLD) shows a compositional bias: low complexity.

It belongs to the TCP-1 chaperonin family. Forms an oligomeric complex of eight-membered rings.

Its function is as follows. Molecular chaperone; binds unfolded polypeptides in vitro, and has a weak ATPase activity. The chain is Thermosome subunit (ths) from Pyrococcus horikoshii (strain ATCC 700860 / DSM 12428 / JCM 9974 / NBRC 100139 / OT-3).